The primary structure comprises 262 residues: Glutamine-binding protein (262 aa).

The signal sequence occupies residues Met-1–Gly-26. Cys-27 is lipidated: N-palmitoyl cysteine. Cys-27 carries S-diacylglycerol cysteine lipidation.

Belongs to the bacterial solute-binding protein 3 family.

It localises to the cell membrane. Its function is as follows. Involved in glutamine-transport system. Interacts with the glutamine-transport system GlnPQ. The chain is Glutamine-binding protein (glnH) from Geobacillus stearothermophilus (Bacillus stearothermophilus).